The sequence spans 580 residues: G1/S-specific cyclin CLN3 (580 aa).

The span at 454–469 (FTPTSSSSSPSPFNSP) shows a compositional bias: low complexity. Disordered stretches follow at residues 454-498 (FTPT…QNSF) and 546-580 (MATAHPCSAPTQLKKRSTSSVDCDFNDSSNLKKTR). Polar residues-rich tracts occupy residues 470–480 (YKTSSSMTTPD) and 563–580 (TSSVDCDFNDSSNLKKTR).

It belongs to the cyclin family.

Functionally, essential for the control of the cell cycle at the G1/S (start) transition. CLN3 may be an upstream activator of the G1 cyclins which directly catalyze start. The protein is G1/S-specific cyclin CLN3 (CLN3) of Saccharomyces cerevisiae (strain ATCC 204508 / S288c) (Baker's yeast).